The sequence spans 404 residues: MKLPIYLDYAATCPVDERVAKKMMEYLTVEGNFGNPASRSHKFGWQAEEAVDVARNYIADLIGADSREIVFTSGATESDNLAIKGAAHFYQSKGKHIITCKTEHKAVLDTCRQLEREGFEVTYLNPKSDGLIDLEELKNAMRDDTILVSIMHVNNEIGVIQDIAAIGELCRARKILFHVDATQSVGKLPINLAELKVDLMSMSSHKLYGPKGIGALYVSRKPRVRLEAIIHGGGHERGMRSGTLPVHQIVGMGEAYRICKEEMASEMPRLKALRDRLYNGLKDIEETYVNGSMEHRLDSNLNISFNYVEGESLMMALRDIAVSSGSACTSASLEPSYVLRALGLNDELAHSSIRFTLGRYTTEEEIDYTIELVKNAVAKLRELSPLWDMFKEGIDLNTIEWTHH.

Residues 75–76, asparagine 155, glutamine 183, and 203–205 each bind pyridoxal 5'-phosphate; these read AT and SSH. An N6-(pyridoxal phosphate)lysine modification is found at lysine 206. Position 243 (threonine 243) interacts with pyridoxal 5'-phosphate. Cysteine 328 acts as the Cysteine persulfide intermediate in catalysis. Cysteine 328 is a [2Fe-2S] cluster binding site.

Belongs to the class-V pyridoxal-phosphate-dependent aminotransferase family. NifS/IscS subfamily. As to quaternary structure, homodimer. Forms a heterotetramer with IscU, interacts with other sulfur acceptors. It depends on pyridoxal 5'-phosphate as a cofactor.

It localises to the cytoplasm. The enzyme catalyses (sulfur carrier)-H + L-cysteine = (sulfur carrier)-SH + L-alanine. It functions in the pathway cofactor biosynthesis; iron-sulfur cluster biosynthesis. In terms of biological role, master enzyme that delivers sulfur to a number of partners involved in Fe-S cluster assembly, tRNA modification or cofactor biosynthesis. Catalyzes the removal of elemental sulfur atoms from cysteine to produce alanine. Functions as a sulfur delivery protein for Fe-S cluster synthesis onto IscU, an Fe-S scaffold assembly protein, as well as other S acceptor proteins. This is Cysteine desulfurase IscS from Pasteurella multocida (strain Pm70).